The sequence spans 862 residues: S-layer protein EA1 (862 aa).

The N-terminal stretch at 1–29 (MAKTNSYKKVIAGTMTAAMVAGIVSPVAA) is a signal peptide. 3 SLH domains span residues 30 to 93 (AGKS…NAQP), 94 to 151 (SFKD…KVNG), and 152 to 214 (ELVT…DNAQ).

It is found in the secreted. The protein resides in the cell wall. The protein localises to the S-layer. Its function is as follows. The S-layer is a paracrystalline mono-layered assembly of proteins which coat the surface of bacteria. The polypeptide is S-layer protein EA1 (eag) (Bacillus anthracis).